The sequence spans 457 residues: tRNA-2-methylthio-N(6)-dimethylallyladenosine synthase (457 aa).

An MTTase N-terminal domain is found at 18-133 (KKLFIETYGC…LPELIASVEA (116 aa)). Residues Cys-27, Cys-63, Cys-97, Cys-171, Cys-175, and Cys-178 each coordinate [4Fe-4S] cluster. Positions 157–390 (CGNHISGFVS…IALQNRLSAE (234 aa)) constitute a Radical SAM core domain. The region spanning 393 to 456 (NRCIGKTYEV…SATLKGEEVF (64 aa)) is the TRAM domain.

The protein belongs to the methylthiotransferase family. MiaB subfamily. Monomer. Requires [4Fe-4S] cluster as cofactor.

The protein resides in the cytoplasm. The catalysed reaction is N(6)-dimethylallyladenosine(37) in tRNA + (sulfur carrier)-SH + AH2 + 2 S-adenosyl-L-methionine = 2-methylsulfanyl-N(6)-dimethylallyladenosine(37) in tRNA + (sulfur carrier)-H + 5'-deoxyadenosine + L-methionine + A + S-adenosyl-L-homocysteine + 2 H(+). Functionally, catalyzes the methylthiolation of N6-(dimethylallyl)adenosine (i(6)A), leading to the formation of 2-methylthio-N6-(dimethylallyl)adenosine (ms(2)i(6)A) at position 37 in tRNAs that read codons beginning with uridine. The polypeptide is tRNA-2-methylthio-N(6)-dimethylallyladenosine synthase (Bacteroides fragilis (strain ATCC 25285 / DSM 2151 / CCUG 4856 / JCM 11019 / LMG 10263 / NCTC 9343 / Onslow / VPI 2553 / EN-2)).